The chain runs to 302 residues: Oxygen-dependent coproporphyrinogen-III oxidase (302 aa).

Position 94 (Ser-94) interacts with substrate. Residues His-98 and His-108 each contribute to the a divalent metal cation site. His-108 (proton donor) is an active-site residue. Position 110–112 (Asn-110–Arg-112) interacts with substrate. Positions 147 and 177 each coordinate a divalent metal cation. The tract at residues Tyr-242–Gln-277 is important for dimerization. Gly-260–Arg-262 lines the substrate pocket.

This sequence belongs to the aerobic coproporphyrinogen-III oxidase family. In terms of assembly, homodimer. A divalent metal cation is required as a cofactor.

It localises to the cytoplasm. The catalysed reaction is coproporphyrinogen III + O2 + 2 H(+) = protoporphyrinogen IX + 2 CO2 + 2 H2O. It participates in porphyrin-containing compound metabolism; protoporphyrin-IX biosynthesis; protoporphyrinogen-IX from coproporphyrinogen-III (O2 route): step 1/1. In terms of biological role, involved in the heme biosynthesis. Catalyzes the aerobic oxidative decarboxylation of propionate groups of rings A and B of coproporphyrinogen-III to yield the vinyl groups in protoporphyrinogen-IX. The protein is Oxygen-dependent coproporphyrinogen-III oxidase of Shewanella oneidensis (strain ATCC 700550 / JCM 31522 / CIP 106686 / LMG 19005 / NCIMB 14063 / MR-1).